A 961-amino-acid polypeptide reads, in one-letter code: Cytochrome b5-like reductase apf12 (961 aa).

Residue A298 participates in FAD binding. The FAD-binding FR-type domain maps to 429-548; it reads ARPQVDAFAW…IKPAPHFRIA (120 aa). Residues 453–456, 499–500, and G753 contribute to the NADP(+) site; these read SRIQ and SK. A Cytochrome b5 heme-binding domain is found at 716–793; it reads LNQITKLELA…LNEMVIGRLD (78 aa). 753 to 755 contacts FAD; that stretch reads GGE.

The protein belongs to the flavoprotein pyridine nucleotide cytochrome reductase family. The cofactor is FAD.

It functions in the pathway secondary metabolite biosynthesis. In terms of biological role, cytochrome b5-like reductase; part of the gene cluster that mediates the biosynthesis of the cyclic tetrapeptide apicidin F (APF). The non-ribosomal peptide synthetase apf1 incorporates four different amino acids to produce apicidin F: L-phenylalanine, D-pipecolic acid (D-pip), N-methoxy-L-tryptophan and L-2-aminooctanedioic acid. L-Phenylalanine is the only proteinogenic amino acid directly used by apf1. The 3 other apf1 substrates are non-proteinogenic and have to be modified by other enzymes of the cluster. Lysine is converted to delta-1-pyrroline-5-carboxylate (P5C) which is reduced to L-pipecolic acid (L-pip) by apf3. L-pip is epimerized to D-pip, probably by apf1 activity, prior to incorporation. L-Tryptophan is N-oxidyzed by one of the cytochrome P450 monooxygenases (apf7 or apf8), and further methylated at the hydroxy group by the O-methyltransferase apf6 to yield N-methoxy-L-tryptophan. The synthesis of the fourth apf1 substrate is more complex. The fatty acid synthase apf5 is involved in the synthesis of the octanoic acid backbone of L-2-aminooctanedioic acid by fixing one acetyl-CoA unit and three malonyl-CoA units. Then one of the cytochrome P450 monooxygenases (apf7 or apf8) may oxidize this backbone to 2-oxooctanoic acid. The aminotransferase apf4 is predicted to catalyze the exchange of the keto group with an amino group. The next step would be the oxidation of 2-aminooctanoic acid by one of the cytochrome P450 monooxygenases (apf7 or apf8). The last step is the oxidation of 2-amino-8-hydroxyoctanoic acid to 2-aminooctanedioic acid is catalyzed by the FAD-dependent monooxygenase apf9. The sequence is that of Cytochrome b5-like reductase apf12 from Gibberella fujikuroi (strain CBS 195.34 / IMI 58289 / NRRL A-6831) (Bakanae and foot rot disease fungus).